Here is a 408-residue protein sequence, read N- to C-terminus: Glutamate N-acetyltransferase (408 aa).

6 residues coordinate substrate: T150, K176, T189, E271, N403, and T408. The Nucleophile role is filled by T189.

The protein belongs to the ArgJ family. In terms of assembly, heterotetramer of two alpha and two beta chains.

The protein resides in the cytoplasm. The enzyme catalyses N(2)-acetyl-L-ornithine + L-glutamate = N-acetyl-L-glutamate + L-ornithine. Its pathway is amino-acid biosynthesis; L-arginine biosynthesis; L-ornithine and N-acetyl-L-glutamate from L-glutamate and N(2)-acetyl-L-ornithine (cyclic): step 1/1. Its function is as follows. Catalyzes the transfer of the acetyl group from N(2)-acetylornithine to glutamate, forming N-acetylglutamate and L-ornithine. This is Glutamate N-acetyltransferase from Methanococcus maripaludis (strain C6 / ATCC BAA-1332).